A 588-amino-acid chain; its full sequence is NADP-dependent malic enzyme 2 (588 aa).

The interval M1 to G21 is disordered. G2 bears the N-acetylglycine mark. The Proton donor role is filled by Y136. Residue R189 participates in NADP(+) binding. The Proton acceptor role is filled by K207. The a divalent metal cation site is built by E279, D280, and D303. NADP(+) contacts are provided by residues D303, L332–A348, and N444.

The protein belongs to the malic enzymes family. As to quaternary structure, homohexamers and homooctamers. The cofactor is Mg(2+). It depends on Mn(2+) as a cofactor. In terms of tissue distribution, expressed in leaves, stems, flowers and roots. Particularly present in vasculatures, trichome basal cells and hydatodes.

The protein localises to the cytoplasm. The catalysed reaction is (S)-malate + NADP(+) = pyruvate + CO2 + NADPH. It carries out the reaction oxaloacetate + H(+) = pyruvate + CO2. With respect to regulation, activated by coenzyme A (CoA), aspartate, succinate and fumarate. Repressed by oxaloacetate, glucose and ATP. The polypeptide is NADP-dependent malic enzyme 2 (NADP-ME2) (Arabidopsis thaliana (Mouse-ear cress)).